Here is a 246-residue protein sequence, read N- to C-terminus: MAGHSKWANIKHRKAAQDAKRGKIFTKLIREITTSARIGDPDPANNPRLRAAVTAALTSNMTRETINRAIARGAGGGDGEQLETIVYEGYGPAGSAVMVECLTDNRNRTVAEVRHAFSKSGGNLGTDGSVAYLFSKKGLLTFVGVDEDALMDAALEAGADDVVTEEDGSIEVYTTPNDFGTVLDALEAAGFKAQNAEVTMIPSTEAELDAETAPKLMRLIDMLEDLDDVQEVYHNGSISDEVAATL.

The protein belongs to the TACO1 family.

The protein localises to the cytoplasm. The chain is Probable transcriptional regulatory protein ASA_2843 from Aeromonas salmonicida (strain A449).